We begin with the raw amino-acid sequence, 311 residues long: Serine/threonine-protein phosphatase 4 catalytic subunit A (311 aa).

Residues Asp-58, His-60, Asp-86, and Asn-118 each contribute to the Mn(2+) site. His-119 functions as the Proton donor in the catalytic mechanism. Mn(2+)-binding residues include His-168 and His-242. Leu-311 carries the leucine methyl ester modification.

This sequence belongs to the PPP phosphatase family. PP-4 (PP-X) subfamily. Serine/threonine-protein phosphatase 4 (PP4) occurs in different assemblies of the catalytic and one or more regulatory subunits. It depends on Mn(2+) as a cofactor.

The protein resides in the cytoplasm. It is found in the cytoskeleton. It localises to the microtubule organizing center. The protein localises to the centrosome. It catalyses the reaction O-phospho-L-seryl-[protein] + H2O = L-seryl-[protein] + phosphate. The enzyme catalyses O-phospho-L-threonyl-[protein] + H2O = L-threonyl-[protein] + phosphate. Its function is as follows. Protein phosphatase that regulates many processes such as microtubule organization at centrosomes. This chain is Serine/threonine-protein phosphatase 4 catalytic subunit A (ppp4ca), found in Danio rerio (Zebrafish).